Reading from the N-terminus, the 77-residue chain is Large ribosomal subunit protein bL28 (77 aa).

It belongs to the bacterial ribosomal protein bL28 family.

This is Large ribosomal subunit protein bL28 from Variovorax paradoxus (strain S110).